The primary structure comprises 102 residues: NADH-quinone oxidoreductase subunit K (102 aa).

3 consecutive transmembrane segments (helical) span residues 4–24, 30–50, and 62–82; these read IPME…LVGL, MLFV…AFIV, and VMFL…LALL.

The protein belongs to the complex I subunit 4L family. In terms of assembly, NDH-1 is composed of 14 different subunits. Subunits NuoA, H, J, K, L, M, N constitute the membrane sector of the complex.

The protein resides in the cell inner membrane. The catalysed reaction is a quinone + NADH + 5 H(+)(in) = a quinol + NAD(+) + 4 H(+)(out). NDH-1 shuttles electrons from NADH, via FMN and iron-sulfur (Fe-S) centers, to quinones in the respiratory chain. The immediate electron acceptor for the enzyme in this species is believed to be ubiquinone. Couples the redox reaction to proton translocation (for every two electrons transferred, four hydrogen ions are translocated across the cytoplasmic membrane), and thus conserves the redox energy in a proton gradient. This Chromohalobacter salexigens (strain ATCC BAA-138 / DSM 3043 / CIP 106854 / NCIMB 13768 / 1H11) protein is NADH-quinone oxidoreductase subunit K.